The following is a 78-amino-acid chain: Putative membrane protein insertion efficiency factor (78 aa).

Belongs to the UPF0161 family.

It is found in the cell membrane. Its function is as follows. Could be involved in insertion of integral membrane proteins into the membrane. In Bacillus mycoides (strain KBAB4) (Bacillus weihenstephanensis), this protein is Putative membrane protein insertion efficiency factor.